A 340-amino-acid chain; its full sequence is UDP-3-O-acylglucosamine N-acyltransferase (340 aa).

Catalysis depends on H247, which acts as the Proton acceptor.

Belongs to the transferase hexapeptide repeat family. LpxD subfamily. As to quaternary structure, homotrimer.

It catalyses the reaction a UDP-3-O-[(3R)-3-hydroxyacyl]-alpha-D-glucosamine + a (3R)-hydroxyacyl-[ACP] = a UDP-2-N,3-O-bis[(3R)-3-hydroxyacyl]-alpha-D-glucosamine + holo-[ACP] + H(+). Its pathway is bacterial outer membrane biogenesis; LPS lipid A biosynthesis. Catalyzes the N-acylation of UDP-3-O-acylglucosamine using 3-hydroxyacyl-ACP as the acyl donor. Is involved in the biosynthesis of lipid A, a phosphorylated glycolipid that anchors the lipopolysaccharide to the outer membrane of the cell. This chain is UDP-3-O-acylglucosamine N-acyltransferase, found in Caulobacter sp. (strain K31).